The chain runs to 460 residues: ESX-1 secretion-associated protein EspB (460 aa).

3 disordered regions span residues 92–116 (LDNDGEGTVQAESAGAVGGDSSAEL), 303–335 (PSDGSGVTPGTGMPAAPMVPPTGSPGGGLPADT), and 405–441 (LGGGGMGMPMGAAHQGQGGAKSKGSQQEDEALYTEDR).

Post-translationally, cleaved in the C-terminal region by MycP1.

The protein localises to the secreted. This Mycobacterium tuberculosis (strain CDC 1551 / Oshkosh) protein is ESX-1 secretion-associated protein EspB.